Here is a 210-residue protein sequence, read N- to C-terminus: Small ribosomal subunit protein uS7 (210 aa).

The segment covering 1–22 (MSDEQPAEDETEEAAAESEDTQ) has biased composition (acidic residues). The interval 1–23 (MSDEQPAEDETEEAAAESEDTQE) is disordered.

It belongs to the universal ribosomal protein uS7 family. In terms of assembly, part of the 30S ribosomal subunit. Contacts proteins S9 and S11.

Its function is as follows. One of the primary rRNA binding proteins, it binds directly to 16S rRNA where it nucleates assembly of the head domain of the 30S subunit. Is located at the subunit interface close to the decoding center. The polypeptide is Small ribosomal subunit protein uS7 (Halobacterium salinarum (strain ATCC 29341 / DSM 671 / R1)).